Here is a 499-residue protein sequence, read N- to C-terminus: Bifunctional purine biosynthesis protein PurH (499 aa).

In terms of domain architecture, MGS-like spans 1–144 (MINRALISVY…KNFKDVIVVT (144 aa)).

The protein belongs to the PurH family.

It carries out the reaction (6R)-10-formyltetrahydrofolate + 5-amino-1-(5-phospho-beta-D-ribosyl)imidazole-4-carboxamide = 5-formamido-1-(5-phospho-D-ribosyl)imidazole-4-carboxamide + (6S)-5,6,7,8-tetrahydrofolate. It catalyses the reaction IMP + H2O = 5-formamido-1-(5-phospho-D-ribosyl)imidazole-4-carboxamide. Its pathway is purine metabolism; IMP biosynthesis via de novo pathway; 5-formamido-1-(5-phospho-D-ribosyl)imidazole-4-carboxamide from 5-amino-1-(5-phospho-D-ribosyl)imidazole-4-carboxamide (10-formyl THF route): step 1/1. It functions in the pathway purine metabolism; IMP biosynthesis via de novo pathway; IMP from 5-formamido-1-(5-phospho-D-ribosyl)imidazole-4-carboxamide: step 1/1. This is Bifunctional purine biosynthesis protein PurH from Clostridium kluyveri (strain NBRC 12016).